A 468-amino-acid chain; its full sequence is Nuclear receptor ROR-alpha A (468 aa).

The nuclear receptor DNA-binding region spans 15–90 (IIPCKICGDK…VGMSRDAVKF (76 aa)). NR C4-type zinc fingers lie at residues 18–38 (CKICGDKSSGIHYGVITCEGC) and 54–73 (CPRQKNCLIDRTSRNRCQHC). Disordered stretches follow at residues 101–129 (LYAEVQKHRLQQQQRDHQQQPGEAEPLTP) and 142–163 (HDDLSGYMNGHTPDGTKPDSGV). One can recognise an NR LBD domain in the interval 217–455 (ELEHLAQNIS…AHFPPLYKEL (239 aa)). Residues 444-455 (VRAHFPPLYKEL) form an AF-2 region.

This sequence belongs to the nuclear hormone receptor family. NR1 subfamily. As to expression, expressed in the brain, in cerebellar-like structures, including Purkinje cells.

The protein localises to the nucleus. Its function is as follows. Nuclear receptor that binds DNA as a monomer to ROR response elements (RORE). Required for proper cerebellum development. The chain is Nuclear receptor ROR-alpha A (roraa) from Danio rerio (Zebrafish).